The sequence spans 545 residues: Membrane protein insertase YidC (545 aa).

The chain crosses the membrane as a helical span at residues 8-28 (ILLATVLSVGILILWQVIFPK). The disordered stretch occupies residues 31-69 (PPKPAPTPAAEVAKPAAPAAPAPGAAAPAVPAPPPDAPE). Over residues 38–59 (PAAEVAKPAAPAAPAPGAAAPA) the composition is skewed to low complexity. 5 helical membrane-spanning segments follow: residues 325–345 (IDYG…LYVM), 355–375 (WGVA…PLTY), 421–441 (LGGC…YAAL), 458–478 (LTAH…SFVM), and 497–517 (FFPG…TLYI).

The protein belongs to the OXA1/ALB3/YidC family. Type 1 subfamily. As to quaternary structure, interacts with the Sec translocase complex via SecD. Specifically interacts with transmembrane segments of nascent integral membrane proteins during membrane integration.

The protein resides in the cell inner membrane. Required for the insertion and/or proper folding and/or complex formation of integral membrane proteins into the membrane. Involved in integration of membrane proteins that insert both dependently and independently of the Sec translocase complex, as well as at least some lipoproteins. Aids folding of multispanning membrane proteins. This Anaeromyxobacter dehalogenans (strain 2CP-C) protein is Membrane protein insertase YidC.